The sequence spans 468 residues: IQ domain-containing protein C (468 aa).

An IQ domain is found at 6 to 35 (LVLKVTALQACIRGFLVRRQFQSLRGEYEA). Disordered stretches follow at residues 113–157 (NASS…GPGL), 202–245 (EVNQ…PGEP), and 329–468 (SHKE…GPAG). Over residues 139–150 (QETRDVSRKNDP) the composition is skewed to basic and acidic residues. Residues 415–426 (SSIERSPSESSH) show a composition bias toward basic and acidic residues.

This Bos taurus (Bovine) protein is IQ domain-containing protein C (IQCC).